Reading from the N-terminus, the 152-residue chain is Phospholipase A2 pkP2 (152 aa).

Positions 1 to 21 are cleaved as a signal peptide; the sequence is MNPAHLLVLLAVCVSLLGASA. Residues 22-27 constitute a propeptide that is removed on maturation; it reads IPPLPL. Intrachain disulfides connect Cys-38-Cys-104, Cys-54-Cys-151, Cys-56-Cys-72, Cys-71-Cys-132, Cys-78-Cys-125, Cys-88-Cys-118, and Cys-111-Cys-123. Tyr-55, Gly-57, and Gly-59 together coordinate Ca(2+). The active site involves His-75. Asp-76 contacts Ca(2+). Asp-126 is a catalytic residue.

The protein belongs to the phospholipase A2 family. Group I subfamily. Requires Ca(2+) as cofactor.

It is found in the secreted. The catalysed reaction is a 1,2-diacyl-sn-glycero-3-phosphocholine + H2O = a 1-acyl-sn-glycero-3-phosphocholine + a fatty acid + H(+). Functionally, PA2 catalyzes the calcium-dependent hydrolysis of the 2-acyl groups in 3-sn-phosphoglycerides. This chain is Phospholipase A2 pkP2, found in Laticauda semifasciata (Black-banded sea krait).